A 206-amino-acid chain; its full sequence is 3-demethoxyubiquinol 3-hydroxylase (206 aa).

E55, E85, H88, E137, E169, and H172 together coordinate Fe cation.

This sequence belongs to the COQ7 family. Fe cation serves as cofactor.

The protein resides in the cell membrane. The catalysed reaction is a 5-methoxy-2-methyl-3-(all-trans-polyprenyl)benzene-1,4-diol + AH2 + O2 = a 3-demethylubiquinol + A + H2O. It participates in cofactor biosynthesis; ubiquinone biosynthesis. In terms of biological role, catalyzes the hydroxylation of 2-nonaprenyl-3-methyl-6-methoxy-1,4-benzoquinol during ubiquinone biosynthesis. This chain is 3-demethoxyubiquinol 3-hydroxylase, found in Azoarcus sp. (strain BH72).